The sequence spans 186 residues: Secreted chorismate mutase (186 aa).

The first 30 residues, 1–30 (MQPTHTLTRLTVIGKLIIASSFFLSLAVQA), serve as a signal peptide directing secretion. A Chorismate mutase domain is found at 31-107 (QQCGQTAPLI…AAKAIQYRYR (77 aa)). A disulfide bond links Cys33 and Cys148. Substrate is bound by residues Arg43, Lys54, Asp63, 99 to 103 (AKAIQ), and Arg127.

In terms of assembly, homodimer.

Its subcellular location is the periplasm. The enzyme catalyses chorismate = prephenate. It functions in the pathway metabolic intermediate biosynthesis; prephenate biosynthesis; prephenate from chorismate: step 1/1. Functionally, catalyzes the Claisen rearrangement of chorismate to prephenate. May play some role in the pathogenicity. This is Secreted chorismate mutase (pheA2) from Yersinia pestis.